Reading from the N-terminus, the 907-residue chain is Leucine-rich repeat-containing G-protein coupled receptor 5 (907 aa).

An N-terminal signal peptide occupies residues 1–21; that stretch reads MDTSRLGVLLSLPVLLQLATG. Topologically, residues 22–561 are extracellular; sequence GSSPRSGVLL…EHLLDGWLIR (540 aa). The 42-residue stretch at 25 to 66 folds into the LRRNT domain; that stretch reads PRSGVLLRGCPTHCHCEPDGRMLLRVDCSDLGLSELPSNLSV. Intrachain disulfides connect Cys34–Cys40 and Cys38–Cys52. 2 N-linked (GlcNAc...) asparagine glycosylation sites follow: Asn63 and Asn77. LRR repeat units follow at residues 67-90, 91-112, 115-136, 139-160, 163-184, 187-208, 211-232, 235-256, 258-279, 282-303, 306-328, 329-350, 353-374, 375-396, 399-420, and 423-446; these read FTSY…PSLR, FLEE…AFTG, SLKV…ALQN, SLQS…CFSG, SLRH…AFRS, ALQA…AFGN, SLVV…CFDG, SLET…IRTL, NLKE…AFVG, SLIT…AFQH, ELRT…TGTA, NLES…VCNQ, NLQV…SVCQ, KLQK…TFQQ, SLRS…AFST, and SLIK…HGLT. Asn208 is a glycosylation site (N-linked (GlcNAc...) asparagine). Residues Cys348 and Cys373 are joined by a disulfide bond. An intrachain disulfide couples Cys479 to Cys541. The N-linked (GlcNAc...) asparagine glycan is linked to Asn500. A helical transmembrane segment spans residues 562 to 582; the sequence is IGVWTIAVLALTCNALVTSTV. Residues 583 to 593 are Cytoplasmic-facing; the sequence is FRSPLYISPIK. A helical membrane pass occupies residues 594–614; the sequence is LLIGVIAAVNMLTGVSSAVLA. Residues 615–638 lie on the Extracellular side of the membrane; sequence GVDAFTFGSFARHGAWWENGVGCH. Residues Cys637 and Cys712 are joined by a disulfide bond. The helical transmembrane segment at 639-659 threads the bilayer; sequence VIGFLSIFASESSVFLLTLAA. Residues 660–682 are Cytoplasmic-facing; that stretch reads LERGFSVKYSAKFETKAPFSSLK. Residues 683–703 traverse the membrane as a helical segment; it reads VIILLCALLALTMAAVPLLGG. The Extracellular portion of the chain corresponds to 704-722; that stretch reads SKYGASPLCLPLPFGEPST. A helical transmembrane segment spans residues 723 to 743; sequence MGYMVALILLNSLCFLMMTIA. The Cytoplasmic segment spans residues 744–767; it reads YTKLYCNLDKGDLENIWDCSMVKH. The chain crosses the membrane as a helical span at residues 768 to 788; sequence IALLLFTNCILNCPVAFLSFS. The Extracellular segment spans residues 789 to 802; sequence SLINLTFISPEVIK. N-linked (GlcNAc...) asparagine glycosylation is present at Asn792. A helical membrane pass occupies residues 803 to 823; sequence FILLVVVPLPACLNPLLYILF. At 824–907 the chain is on the cytoplasmic side; sequence NPHFKEDLVS…LSSVAFVPCL (84 aa).

This sequence belongs to the G-protein coupled receptor 1 family. In terms of assembly, identified in a complex composed of RNF43, LGR5 and RSPO1. Also interacts with other R-spondin ligands, including RSPO2, RSPO3 and RSPO4. In terms of tissue distribution, expressed in skeletal muscle, placenta, spinal cord, and various region of brain. Expressed at the base of crypts in colonic and small mucosa stem cells. In premalignant cancer expression is not restricted to the cript base. Overexpressed in cancers of the ovary, colon and liver.

Its subcellular location is the cell membrane. The protein localises to the golgi apparatus. It localises to the trans-Golgi network membrane. Its function is as follows. Receptor for R-spondins that potentiates the canonical Wnt signaling pathway and acts as a stem cell marker of the intestinal epithelium and the hair follicle. Upon binding to R-spondins (RSPO1, RSPO2, RSPO3 or RSPO4), associates with phosphorylated LRP6 and frizzled receptors that are activated by extracellular Wnt receptors, triggering the canonical Wnt signaling pathway to increase expression of target genes. In contrast to classical G-protein coupled receptors, does not activate heterotrimeric G-proteins to transduce the signal. Involved in the development and/or maintenance of the adult intestinal stem cells during postembryonic development. This Homo sapiens (Human) protein is Leucine-rich repeat-containing G-protein coupled receptor 5 (LGR5).